The primary structure comprises 420 residues: Transcription activator GLK1 (420 aa).

The segment at 74–152 (GDFSNHMNAS…NRISNNEGKR (79 aa)) is disordered. Over residues 106-117 (KGEEVVSKRDDV) the composition is skewed to basic and acidic residues. Low complexity predominate over residues 135 to 147 (SSSASSKNNRISN). The myb-like GARP DNA-binding region spans 150 to 209 (GKRKVKVDWTPELHRRFVEAVEQLGVDKAVPSRILELMGVHCLTRHNVASHLQKYRSHRK).

Interacts with NAC92. In terms of tissue distribution, expressed in rosette and cauline leaves. Expressed at low levels in cotyledons and shoots.

The protein resides in the nucleus. In terms of biological role, transcriptional activator that functions with GLK2 to promote chloroplast development. Acts as an activator of nuclear photosynthetic genes involved in chlorophyll biosynthesis, light harvesting, and electron transport. Acts in a cell-autonomous manner to coordinate and maintain the photosynthetic apparatus within individual cells. May function in photosynthetic capacity optimization by integrating responses to variable environmental and endogenous cues. Prevents premature senescence. The polypeptide is Transcription activator GLK1 (GLK1) (Arabidopsis thaliana (Mouse-ear cress)).